The sequence spans 303 residues: Elongation factor Ts (303 aa).

The involved in Mg(2+) ion dislocation from EF-Tu stretch occupies residues 81 to 84 (TDFV).

The protein belongs to the EF-Ts family.

It localises to the cytoplasm. Its function is as follows. Associates with the EF-Tu.GDP complex and induces the exchange of GDP to GTP. It remains bound to the aminoacyl-tRNA.EF-Tu.GTP complex up to the GTP hydrolysis stage on the ribosome. In Mesomycoplasma hyopneumoniae (strain 7448) (Mycoplasma hyopneumoniae), this protein is Elongation factor Ts.